Consider the following 151-residue polypeptide: Transcriptional repressor NrdR (151 aa).

A zinc finger spans residues 3-34; sequence CPYCGYEETRVLDSRVDSSGMTVRRRRECVKC. Residues 49–139 enclose the ATP-cone domain; that stretch reads VFVVKKDGKR…VYKDFREIDQ (91 aa).

It belongs to the NrdR family. The cofactor is Zn(2+).

Functionally, negatively regulates transcription of bacterial ribonucleotide reductase nrd genes and operons by binding to NrdR-boxes. This Thermosipho melanesiensis (strain DSM 12029 / CIP 104789 / BI429) protein is Transcriptional repressor NrdR.